Reading from the N-terminus, the 211-residue chain is Putative hydrolase SMU_367 (211 aa).

Residues 1–29 (MKKQFLEKAVFTVAATAATVVLGNKMADA) form the signal peptide. The LysM domain occupies 30–74 (DTYTLQEGDSFFSVAQRYHMDAYELASMNGKDITSLILPGQTLTV). Positions 77–101 (SAAPDNQAAAPTDTTQATTETNDAN) are disordered. Low complexity predominate over residues 78–101 (AAPDNQAAAPTDTTQATTETNDAN). A Peptidase C51 domain is found at 85–209 (AAPTDTTQAT…GTPGSVSYIY (125 aa)).

In Streptococcus mutans serotype c (strain ATCC 700610 / UA159), this protein is Putative hydrolase SMU_367.